Consider the following 177-residue polypeptide: Peptidyl-tRNA hydrolase (177 aa).

Residue Y18 coordinates tRNA. The active-site Proton acceptor is the H23. TRNA is bound by residues F65, N67, and N113.

Belongs to the PTH family. As to quaternary structure, monomer.

It is found in the cytoplasm. It carries out the reaction an N-acyl-L-alpha-aminoacyl-tRNA + H2O = an N-acyl-L-amino acid + a tRNA + H(+). In terms of biological role, hydrolyzes ribosome-free peptidyl-tRNAs (with 1 or more amino acids incorporated), which drop off the ribosome during protein synthesis, or as a result of ribosome stalling. Functionally, catalyzes the release of premature peptidyl moieties from peptidyl-tRNA molecules trapped in stalled 50S ribosomal subunits, and thus maintains levels of free tRNAs and 50S ribosomes. The chain is Peptidyl-tRNA hydrolase from Corynebacterium efficiens (strain DSM 44549 / YS-314 / AJ 12310 / JCM 11189 / NBRC 100395).